The primary structure comprises 600 residues: Integrator complex subunit 11 (600 aa).

Residues H68, H70, D72, H73, H157, and D178 each contribute to the Zn(2+) site. The HXHXDH motif motif lies at 68–73; sequence HFHLDH. E203 is a catalytic residue. A Zn(2+)-binding site is contributed by H414. The short motif at 469 to 479 is the Nuclear localization signal element; sequence LLPDAKKPKLM.

The protein belongs to the metallo-beta-lactamase superfamily. RNA-metabolizing metallo-beta-lactamase-like family. INTS11 subfamily. As to quaternary structure, component of the Integrator complex, composed of core subunits INTS1, INTS2, INTS3, INTS4, INTS5, INTS6, INTS7, INTS8, INTS9/RC74, INTS10, INTS11/CPSF3L, INTS12, INTS13, INTS14 and INTS15. The core complex associates with protein phosphatase 2A subunits PPP2CA and PPP2R1A, to form the Integrator-PP2A (INTAC) complex. INTS11 is part of the RNA endonuclease subcomplex, composed of INTS4, INTS9, INTS11 and inositol hexakisphosphate (InsP6). Zn(2+) is required as a cofactor.

The protein localises to the nucleus. It localises to the cytoplasm. Its function is as follows. RNA endonuclease component of the integrator complex, a multiprotein complex that terminates RNA polymerase II (Pol II) transcription in the promoter-proximal region of genes. The integrator complex provides a quality checkpoint during transcription elongation by driving premature transcription termination of transcripts that are unfavorably configured for transcriptional elongation: the complex terminates transcription by (1) catalyzing dephosphorylation of the C-terminal domain (CTD) of Pol II subunit POLR2A/RPB1 and SUPT5H/SPT5, (2) degrading the exiting nascent RNA transcript via endonuclease activity and (3) promoting the release of Pol II from bound DNA. The integrator complex is also involved in terminating the synthesis of non-coding Pol II transcripts, such as enhancer RNAs (eRNAs), small nuclear RNAs (snRNAs), telomerase RNAs and long non-coding RNAs (lncRNAs). Within the integrator complex, INTS11 constitutes the RNA endonuclease subunit that degrades exiting nascent RNA transcripts. The chain is Integrator complex subunit 11 (INTS11) from Gallus gallus (Chicken).